The primary structure comprises 83 residues: Exodeoxyribonuclease 7 small subunit (83 aa).

Belongs to the XseB family. In terms of assembly, heterooligomer composed of large and small subunits.

The protein resides in the cytoplasm. The enzyme catalyses Exonucleolytic cleavage in either 5'- to 3'- or 3'- to 5'-direction to yield nucleoside 5'-phosphates.. In terms of biological role, bidirectionally degrades single-stranded DNA into large acid-insoluble oligonucleotides, which are then degraded further into small acid-soluble oligonucleotides. This chain is Exodeoxyribonuclease 7 small subunit, found in Rhizobium meliloti (strain 1021) (Ensifer meliloti).